The primary structure comprises 630 residues: Angiotensin-converting enzyme-related protein (630 aa).

A signal peptide spans Met-1–Ser-22. The Peptidase M2 domain maps to Ser-28–Gly-615. 2 disulfides stabilise this stretch: Cys-142–Cys-150 and Cys-344–Cys-362. Residue His-375 coordinates Zn(2+). Glu-376 acts as the Proton acceptor in catalysis. Residues His-379 and Glu-403 each contribute to the Zn(2+) site. Catalysis depends on His-505, which acts as the Proton donor. A disulfide bond links Cys-530 and Cys-548.

The protein belongs to the peptidase M2 family. Zn(2+) is required as a cofactor. Glycosylated.

The protein localises to the secreted. It localises to the extracellular space. The catalysed reaction is Release of a C-terminal dipeptide, oligopeptide-|-Xaa-Yaa, when Xaa is not Pro, and Yaa is neither Asp nor Glu. Thus, conversion of angiotensin I to angiotensin II, with increase in vasoconstrictor activity, but no action on angiotensin II.. Its activity is regulated as follows. Inhibited by captopril, lisinopril, trandolaprilat, fosinoprilat and enalaprilat. Its function is as follows. May be involved in the specific maturation or degradation of a number of bioactive peptides. May have a role in the specification of heart progenitors. This is Angiotensin-converting enzyme-related protein (Acer) from Drosophila melanogaster (Fruit fly).